The following is a 117-amino-acid chain: Non-specific lipid-transfer protein B (117 aa).

A signal peptide spans 1 to 25 (MAGLVKLSCLVLACMIVAGPIATNA). Intrachain disulfides connect cysteine 29-cysteine 76, cysteine 39-cysteine 53, cysteine 54-cysteine 99, and cysteine 74-cysteine 113.

This sequence belongs to the plant LTP family.

In terms of biological role, plant non-specific lipid-transfer proteins transfer phospholipids as well as galactolipids across membranes. May play a role in wax or cutin deposition in the cell walls of expanding epidermal cells and certain secretory tissues. The sequence is that of Non-specific lipid-transfer protein B (WAX9B) from Brassica oleracea var. italica (Broccoli).